We begin with the raw amino-acid sequence, 336 residues long: MEPRAAVLKLIEHKHLTTLEAESFMNHVMKGEVSEILLSSFLTAMRFNGESVEEVLGCTLALRKNALRPKTVFPFDLLDTCGTGGDGQGTINISTLSAIVLASLGIKVAKHGNRSVSSHTGSSDILTRLGYQTETTQEEVEAHLVNRGFTFLFAPMWHPSMKHAGPVRKELGFRTVFNMIGPLSNPFSPQFQIIGVYQPELMELFIKVLQSLGLKRALVCHSRDGLDEFSIFQITDYTFLENGVISRHSFDPKILGLSSLNKEEVYASSSDHAEVLARKVLNSESIAGTHAVALNAGAGLFVMGKIDTIEQGYQIAKEAILSGKTKKYFEDLISKE.

Residues Gly82, 85–86 (GD), Thr90, 92–95 (NIST), 110–118 (KHGNRSVSS), and Ser122 each bind 5-phospho-alpha-D-ribose 1-diphosphate. Gly82 lines the anthranilate pocket. Position 94 (Ser94) interacts with Mg(2+). Asn113 serves as a coordination point for anthranilate. Arg168 is a binding site for anthranilate. Positions 227 and 228 each coordinate Mg(2+).

This sequence belongs to the anthranilate phosphoribosyltransferase family. In terms of assembly, homodimer. Mg(2+) serves as cofactor.

It catalyses the reaction N-(5-phospho-beta-D-ribosyl)anthranilate + diphosphate = 5-phospho-alpha-D-ribose 1-diphosphate + anthranilate. It participates in amino-acid biosynthesis; L-tryptophan biosynthesis; L-tryptophan from chorismate: step 2/5. Its function is as follows. Catalyzes the transfer of the phosphoribosyl group of 5-phosphorylribose-1-pyrophosphate (PRPP) to anthranilate to yield N-(5'-phosphoribosyl)-anthranilate (PRA). The protein is Anthranilate phosphoribosyltransferase of Leptospira interrogans serogroup Icterohaemorrhagiae serovar Lai (strain 56601).